A 252-amino-acid polypeptide reads, in one-letter code: Transcriptional regulatory protein HptR (252 aa).

Residues 3–118 form the Response regulatory domain; sequence KVVICDDERI…QLEVILGRLV (116 aa). 4-aspartylphosphate is present on Asp55. Positions 153 to 250 constitute an HTH araC/xylS-type domain; the sequence is NQIVDQIKQS…QMSPSDYCKQ (98 aa). 2 consecutive DNA-binding regions (H-T-H motif) follow at residues 170–191 and 217–240; these read SDLI…KDHV and HYEI…KKYL.

Post-translationally, phosphorylated by HptS.

It localises to the cytoplasm. Functionally, member of the two-component regulatory system HptS/HptR that regulates genes involved in hexose phosphate transport system in response to changes in extracellular phosphate sources. Activates uhpT expression to facilitate glucose-6-phosphate/G6P utilization by directly binding to its promoter. Antagonizes CcpA-dependent transcription of a subset of CcpA-regulated genes involved in antibiotic susceptibility. This Staphylococcus aureus (strain Mu50 / ATCC 700699) protein is Transcriptional regulatory protein HptR (hptR).